A 230-amino-acid chain; its full sequence is Ion-translocating oxidoreductase complex subunit E (230 aa).

The next 6 helical transmembrane spans lie at 11–31 (GMWANNPALVQLLGLCPLLAV), 39–59 (LGLGIATLLVLVGSNVSVSLV), 69–89 (IPVFVMIIASLVTCVQLLMNA), 93–113 (GLYLSLGIFIPLIVTNCIIIG), 132–152 (FWMGLGMTSVLVVLGAMREII), and 182–202 (SFLLALLPPGAFIGVGFLIAL).

It belongs to the NqrDE/RnfAE family. As to quaternary structure, the complex is composed of six subunits: RnfA, RnfB, RnfC, RnfD, RnfE and RnfG.

It is found in the cell inner membrane. In terms of biological role, part of a membrane-bound complex that couples electron transfer with translocation of ions across the membrane. This is Ion-translocating oxidoreductase complex subunit E from Vibrio atlanticus (strain LGP32) (Vibrio splendidus (strain Mel32)).